A 147-amino-acid chain; its full sequence is Ribonuclease 4 (147 aa).

The signal sequence occupies residues 1–28 (MALQRTHSLLLLLLLTLLGLGLVQPSYG). Gln-29 bears the Pyrrolidone carboxylic acid mark. DUMP-binding residues include Arg-35, His-40, Lys-68, Asn-71, and Thr-72. His-40 functions as the Proton acceptor in the catalytic mechanism. 4 disulfide bridges follow: Cys-53/Cys-109, Cys-67/Cys-120, Cys-85/Cys-135, and Cys-92/Cys-99. The active-site Proton donor is His-144. Phe-145 serves as a coordination point for dUMP.

This sequence belongs to the pancreatic ribonuclease family.

The protein resides in the secreted. Cleaves preferentially after uridine bases. Has antimicrobial activity against uropathogenic E.coli (UPEC). Probably contributes to urinary tract sterility. This chain is Ribonuclease 4 (RNASE4), found in Pongo abelii (Sumatran orangutan).